Consider the following 401-residue polypeptide: MLARRKPVLPALTINPTIAEGPSPTSEGASEANLVDLQKKLEELDLDEQQRKRLEAFLTQKAKVGELKDDDFERISELGAGNGGVVTKARHRPSGLIMARKLIHLEIKPAVRNQIIRELQVLHECNSPYIVGFYGAFYSDGEISICMEHMDGGSLDQVLKEAKRIPEDILGKVSIAVLRGLAYLREKHQIMHRDVKPSNILVNSRGEIKLCDFGVSGQLIDSMANSFVGTRSYMSPERLQGTHYSVQSDIWSMGLSLVELAIGRYPIPPPDAKELEASFGRPVVDGADGEPHSVSPRPRPPGRPISVGHGMDSRPAMAIFELLDYIVNEPPPKLPSGVFSSDFQEFVNKCLIKNPAERADLKLLMNHAFIKRSEGEEVDFAGWLCRTLRLKQPSTPTRTAV.

Residue methionine 1 is modified to N-acetylmethionine. Residue serine 23 is modified to Phosphoserine. The Protein kinase domain occupies 72–370 (FERISELGAG…LKLLMNHAFI (299 aa)). Residues 78–86 (LGAGNGGVV) and lysine 101 each bind ATP. Aspartate 194 serves as the catalytic Proton acceptor. Serine 222 and serine 226 each carry phosphoserine; by RAF. The interval 282–310 (PVVDGADGEPHSVSPRPRPPGRPISVGHG) is disordered. A phosphoserine mark is found at serine 293, serine 295, and serine 306. Phosphothreonine is present on residues threonine 395 and threonine 397.

This sequence belongs to the protein kinase superfamily. STE Ser/Thr protein kinase family. MAP kinase kinase subfamily. As to quaternary structure, interacts with MORG1. Interacts with SGK1. Interacts with KSR1. Interacts with KSR1 and BRAF; the interaction with KSR1 mediates KSR1-BRAF dimerization. Interacts with GLS. It depends on Mg(2+) as a cofactor. Post-translationally, phosphorylation on Ser/Thr by MAP kinase kinase kinases (RAF or MEKK1) positively regulates the kinase activity. Phosphorylated by MAP2K1/MEK1. Low levels of autophosphorylation have been observed. As to expression, expressed in adult intestine, kidney, liver, lung, pancreas, spleen, thymus, and at high levels in the neonatal brain. Lower expression is found in adult brain and heart.

It is found in the cytoplasm. It localises to the membrane. The enzyme catalyses L-seryl-[protein] + ATP = O-phospho-L-seryl-[protein] + ADP + H(+). It carries out the reaction L-threonyl-[protein] + ATP = O-phospho-L-threonyl-[protein] + ADP + H(+). The catalysed reaction is L-tyrosyl-[protein] + ATP = O-phospho-L-tyrosyl-[protein] + ADP + H(+). With respect to regulation, inhibited by serine/threonine phosphatase 2A. Functionally, catalyzes the concomitant phosphorylation of a threonine and a tyrosine residue in a Thr-Glu-Tyr sequence located in MAP kinases. Activates the ERK1 and ERK2 MAP kinases. Activates BRAF in a KSR1 or KSR2-dependent manner; by binding to KSR1 or KSR2 releases the inhibitory intramolecular interaction between KSR1 or KSR2 protein kinase and N-terminal domains which promotes KSR1 or KSR2-BRAF dimerization and BRAF activation. The sequence is that of Dual specificity mitogen-activated protein kinase kinase 2 (Map2k2) from Mus musculus (Mouse).